The following is a 263-amino-acid chain: Norsolorinic acid ketoreductase stcE (263 aa).

7 residues coordinate NADP(+): leucine 29, aspartate 76, asparagine 105, tyrosine 177, lysine 181, isoleucine 208, and serine 210. Tyrosine 177 acts as the Proton donor in catalysis. Lysine 181 acts as the Lowers pKa of active site Tyr in catalysis.

Belongs to the short-chain dehydrogenases/reductases (SDR) family.

It carries out the reaction (1'S)-averantin + NADP(+) = norsolorinic acid + NADPH + H(+). It participates in mycotoxin biosynthesis; sterigmatocystin biosynthesis. In terms of biological role, short chain dehydrogenase; part of the gene cluster that mediates the biosynthesis of sterigmatocystin (ST), a polyketide-derived furanocoumarin which is part of the most toxic and carcinogenic compounds among the known mycotoxins. The first step in the biosynthesis of sterigmatocystin is the production of hexanoate by the fatty acid synthase (FAS) units stcJ and stcK. The polyketide backbone is assembled by the non-reducing polyketide synthase stcA by condensation of the starter hexanoyl-CoA and 7 malonyl-CoA extender units followed by cyclization and release of norsolorinic acid. Norsolorinic acid is the first stable intermediate in the biosynthesis of sterigmatocystin and is converted into averantin (AVN) by the ketoreductase stcE which reduces the hexanoate ketone to an alcohol. Averantin is then oxidized into 5'-hydroxyaverantin (HAVN) by the cytochrome P450 monooxygenase stcF. 5'-hydroxyaverantin is further converted to 5'-oxyaverantin (OAVN) by the 5'-hydroxyaverantin dehydrogenase stcG. The next step is the conversion of OAVN into averufin (AVF) which is catalyzed by a yet to be identified enzyme. The cytochrome P450 monooxygenase stcB and the flavin-binding monooxygenase stcW are both required for the conversion of averufin to 1-hydroxyversicolorone. The esterase stcI probably catalyzes the formation of versiconal hemiacetal acetate from 1-hydroxyversicolorone. The oxydoreductase stcN then probably catalyzes the biosynthetic step from versiconal to versicolorin B (VERB). The next step is performed by the versicolorin B desaturase stcL to produce versicolorin A (VERA). The ketoreductase stcU and the cytochrome P450 monooxygenase stcS are involved in the conversion of versicolorin A to demethylsterigmatocystin. The Baeyer-Villiger oxidas stcQ and the reductase stcR might be involved in the biosynthetic step from versicolorin A to demethylsterigmatocystin. The final step in the biosynthesis of sterigmatocystin is the methylation of demethylsterigmatocystin catalyzed by the methyltransferase stcP. The sequence is that of Norsolorinic acid ketoreductase stcE from Emericella nidulans (strain FGSC A4 / ATCC 38163 / CBS 112.46 / NRRL 194 / M139) (Aspergillus nidulans).